Reading from the N-terminus, the 221-residue chain is Carbonic anhydrase (221 aa).

Zn(2+)-binding residues include C57, D59, H112, and C115.

This sequence belongs to the beta-class carbonic anhydrase family. It depends on Zn(2+) as a cofactor.

The protein resides in the cytoplasm. The protein localises to the nucleus. Its subcellular location is the mitochondrion intermembrane space. The catalysed reaction is hydrogencarbonate + H(+) = CO2 + H2O. Catalyzes the reversible hydration of CO(2) to H(2)CO(3). The main role may be to provide inorganic carbon for the bicarbonate-dependent carboxylation reactions catalyzed by pyruvate carboxylase, acetyl-CoA carboxylase and carbamoyl-phosphate synthetase. Involved in protection against oxidative damage. Encodes a substrate for the non-classical protein export pathway for proteins that lack a cleavable signal sequence. This chain is Carbonic anhydrase (NCE103), found in Saccharomyces cerevisiae (strain ATCC 204508 / S288c) (Baker's yeast).